Consider the following 577-residue polypeptide: 5'-nucleotidase (577 aa).

The N-terminal stretch at 1 to 30 is a signal peptide; that stretch reads MPRVPSASATGSSALLSLLCAFSLGRAAPF. Zn(2+)-binding residues include aspartate 39, histidine 41, aspartate 86, and asparagine 118. Asparagine 135 carries N-linked (GlcNAc...) asparagine glycosylation. Histidine 221 and histidine 244 together coordinate Zn(2+). Substrate is bound at residue asparagine 246. Asparagine 311 and asparagine 347 each carry an N-linked (GlcNAc...) asparagine glycan. 2 disulfide bridges follow: cysteine 353-cysteine 358 and cysteine 365-cysteine 387. Arginine 354 contacts substrate. Positions 390 and 395 each coordinate substrate. Residue asparagine 403 is glycosylated (N-linked (GlcNAc...) asparagine). Substrate is bound at residue phenylalanine 417. Cysteine 476 and cysteine 479 form a disulfide bridge. Residue 500–506 participates in substrate binding; the sequence is YIAEGGD. Serine 552 is lipidated: GPI-anchor amidated serine. Positions 553–577 are cleaved as a propeptide — removed in mature form; that stretch reads ATLPIINLKIGLSLFAFLTWFLHCS.

Belongs to the 5'-nucleotidase family. Homodimer. Requires Zn(2+) as cofactor.

The protein resides in the cell membrane. The enzyme catalyses a ribonucleoside 5'-phosphate + H2O = a ribonucleoside + phosphate. Functionally, hydrolyzes extracellular nucleotides into membrane permeable nucleosides. The sequence is that of 5'-nucleotidase from Diplobatis ommata (Ocellated electric ray).